The following is a 260-amino-acid chain: Neurotrophin-3 (260 aa).

The N-terminal stretch at methionine 1–alanine 18 is a signal peptide. Residues threonine 19–arginine 141 constitute a propeptide that is removed on maturation. Asparagine 134 carries N-linked (GlcNAc...) asparagine glycosylation. 3 disulfides stabilise this stretch: cysteine 155–cysteine 220, cysteine 198–cysteine 249, and cysteine 208–cysteine 251.

This sequence belongs to the NGF-beta family.

Its subcellular location is the secreted. In terms of biological role, seems to promote the survival of visceral and proprioceptive sensory neurons. This is Neurotrophin-3 (ntf3) from Xenopus laevis (African clawed frog).